The following is a 340-amino-acid chain: S-adenosylmethionine:tRNA ribosyltransferase-isomerase (340 aa).

This sequence belongs to the QueA family. Monomer.

The protein resides in the cytoplasm. It carries out the reaction 7-aminomethyl-7-carbaguanosine(34) in tRNA + S-adenosyl-L-methionine = epoxyqueuosine(34) in tRNA + adenine + L-methionine + 2 H(+). It participates in tRNA modification; tRNA-queuosine biosynthesis. Functionally, transfers and isomerizes the ribose moiety from AdoMet to the 7-aminomethyl group of 7-deazaguanine (preQ1-tRNA) to give epoxyqueuosine (oQ-tRNA). The chain is S-adenosylmethionine:tRNA ribosyltransferase-isomerase from Nitratiruptor sp. (strain SB155-2).